Here is a 308-residue protein sequence, read N- to C-terminus: Ribosomal protein L11 methyltransferase (308 aa).

S-adenosyl-L-methionine is bound by residues threonine 160, glycine 181, aspartate 203, and asparagine 245.

The protein belongs to the methyltransferase superfamily. PrmA family.

Its subcellular location is the cytoplasm. It catalyses the reaction L-lysyl-[protein] + 3 S-adenosyl-L-methionine = N(6),N(6),N(6)-trimethyl-L-lysyl-[protein] + 3 S-adenosyl-L-homocysteine + 3 H(+). In terms of biological role, methylates ribosomal protein L11. This chain is Ribosomal protein L11 methyltransferase, found in Thermoanaerobacter pseudethanolicus (strain ATCC 33223 / 39E) (Clostridium thermohydrosulfuricum).